The chain runs to 261 residues: Cytochrome c oxidase subunit 3 (261 aa).

Topologically, residues 1 to 15 (MTRQTHAYHMVNPSP) are mitochondrial matrix. The chain crosses the membrane as a helical span at residues 16–34 (WPLTGALSALLMTSGLIMW). At 35 to 40 (FHFNST) the chain is on the mitochondrial intermembrane side. A helical membrane pass occupies residues 41–66 (ILLMLGLTTNMLTMYQWWRDVIREST). The Mitochondrial matrix portion of the chain corresponds to 67–72 (FQGHHT). The chain crosses the membrane as a helical span at residues 73 to 105 (PNVQKGLRYGMILFIISEVLFFTGFFWAFYHSS). The Mitochondrial intermembrane segment spans residues 106–128 (LAPTPELGGCWPPTGIHPLNPLE). Residues 129–152 (VPLLNTSVLLASGVSITWAHHSLM) traverse the membrane as a helical segment. The Mitochondrial matrix segment spans residues 153-155 (EGN). Residues 156–183 (RNHMLQALFITIALGVYFTLLQASEYYE) form a helical membrane-spanning segment. Topologically, residues 184 to 190 (APFTISD) are mitochondrial intermembrane. The chain crosses the membrane as a helical span at residues 191–223 (GVYGSTFFVATGFHGLHVIIGSTFLIVCFFRQL). Residues 224–232 (KFHFTSNHH) are Mitochondrial matrix-facing. Residues 233-256 (FGFEAAAWYWHFVDVVWLFLYVSI) traverse the membrane as a helical segment. The Mitochondrial intermembrane segment spans residues 257 to 261 (YWWGS).

It belongs to the cytochrome c oxidase subunit 3 family. In terms of assembly, component of the cytochrome c oxidase (complex IV, CIV), a multisubunit enzyme composed of 14 subunits. The complex is composed of a catalytic core of 3 subunits MT-CO1, MT-CO2 and MT-CO3, encoded in the mitochondrial DNA, and 11 supernumerary subunits COX4I, COX5A, COX5B, COX6A, COX6B, COX6C, COX7A, COX7B, COX7C, COX8 and NDUFA4, which are encoded in the nuclear genome. The complex exists as a monomer or a dimer and forms supercomplexes (SCs) in the inner mitochondrial membrane with NADH-ubiquinone oxidoreductase (complex I, CI) and ubiquinol-cytochrome c oxidoreductase (cytochrome b-c1 complex, complex III, CIII), resulting in different assemblies (supercomplex SCI(1)III(2)IV(1) and megacomplex MCI(2)III(2)IV(2)).

The protein resides in the mitochondrion inner membrane. The catalysed reaction is 4 Fe(II)-[cytochrome c] + O2 + 8 H(+)(in) = 4 Fe(III)-[cytochrome c] + 2 H2O + 4 H(+)(out). Functionally, component of the cytochrome c oxidase, the last enzyme in the mitochondrial electron transport chain which drives oxidative phosphorylation. The respiratory chain contains 3 multisubunit complexes succinate dehydrogenase (complex II, CII), ubiquinol-cytochrome c oxidoreductase (cytochrome b-c1 complex, complex III, CIII) and cytochrome c oxidase (complex IV, CIV), that cooperate to transfer electrons derived from NADH and succinate to molecular oxygen, creating an electrochemical gradient over the inner membrane that drives transmembrane transport and the ATP synthase. Cytochrome c oxidase is the component of the respiratory chain that catalyzes the reduction of oxygen to water. Electrons originating from reduced cytochrome c in the intermembrane space (IMS) are transferred via the dinuclear copper A center (CU(A)) of subunit 2 and heme A of subunit 1 to the active site in subunit 1, a binuclear center (BNC) formed by heme A3 and copper B (CU(B)). The BNC reduces molecular oxygen to 2 water molecules using 4 electrons from cytochrome c in the IMS and 4 protons from the mitochondrial matrix. This is Cytochrome c oxidase subunit 3 (MT-CO3) from Eudorcas rufifrons (Red-fronted gazelle).